A 257-amino-acid chain; its full sequence is 1-(5-phosphoribosyl)-5-[(5-phosphoribosylamino)methylideneamino] imidazole-4-carboxamide isomerase (257 aa).

Residue Asp8 is the Proton acceptor of the active site. Catalysis depends on Asp129, which acts as the Proton donor.

This sequence belongs to the HisA/HisF family.

It localises to the cytoplasm. It catalyses the reaction 1-(5-phospho-beta-D-ribosyl)-5-[(5-phospho-beta-D-ribosylamino)methylideneamino]imidazole-4-carboxamide = 5-[(5-phospho-1-deoxy-D-ribulos-1-ylimino)methylamino]-1-(5-phospho-beta-D-ribosyl)imidazole-4-carboxamide. It functions in the pathway amino-acid biosynthesis; L-histidine biosynthesis; L-histidine from 5-phospho-alpha-D-ribose 1-diphosphate: step 4/9. This is 1-(5-phosphoribosyl)-5-[(5-phosphoribosylamino)methylideneamino] imidazole-4-carboxamide isomerase from Cyanothece sp. (strain PCC 7425 / ATCC 29141).